Consider the following 802-residue polypeptide: Ent-copalyl diphosphate synthase, chloroplastic (802 aa).

The N-terminal 60 residues, M1–N60, are a transit peptide targeting the chloroplast. K245 contacts substrate. Mg(2+) contacts are provided by D377 and D379. Positions D377 to D380 match the DXDD motif motif. Substrate is bound at residue K463.

This sequence belongs to the terpene synthase family. Tpsc subfamily. It depends on Mg(2+) as a cofactor. In terms of processing, the N-terminus is blocked. In terms of tissue distribution, expressed in roots, leaves, flowers and also in siliques.

The protein localises to the plastid. The protein resides in the chloroplast. It carries out the reaction (2E,6E,10E)-geranylgeranyl diphosphate = ent-copalyl diphosphate. The protein operates within plant hormone biosynthesis; gibberellin biosynthesis. Inhibited by high concentrations of magnesium. In terms of biological role, catalyzes the conversion of geranylgeranyl diphosphate to the gibberellin precursor ent-copalyl diphosphate. The protein is Ent-copalyl diphosphate synthase, chloroplastic (GA1) of Arabidopsis thaliana (Mouse-ear cress).